A 187-amino-acid chain; its full sequence is Inosine triphosphate pyrophosphatase (187 aa).

Position 11 to 16 (11 to 16 (TSNKNK)) interacts with ITP. Glu39 provides a ligand contact to Mg(2+). Residues Lys51, 67 to 68 (DT), Lys84, 143 to 146 (FGWD), Lys164, and 169 to 170 (HR) each bind ITP.

Belongs to the HAM1 NTPase family. In terms of assembly, homodimer. Requires Mg(2+) as cofactor. The cofactor is Mn(2+).

The protein localises to the cytoplasm. It is found in the nucleus. The catalysed reaction is ITP + H2O = IMP + diphosphate + H(+). The enzyme catalyses dITP + H2O = dIMP + diphosphate + H(+). It carries out the reaction XTP + H2O = XMP + diphosphate + H(+). Its function is as follows. Pyrophosphatase that hydrolyzes non-canonical purine nucleotides such as inosine triphosphate (ITP), deoxyinosine triphosphate (dITP) or xanthosine 5'-triphosphate (XTP) to their respective monophosphate derivatives. The enzyme does not distinguish between the deoxy- and ribose forms. Probably excludes non-canonical purines from RNA and DNA precursor pools, thus preventing their incorporation into RNA and DNA and avoiding chromosomal lesions. The polypeptide is Inosine triphosphate pyrophosphatase (Aspergillus fumigatus (strain ATCC MYA-4609 / CBS 101355 / FGSC A1100 / Af293) (Neosartorya fumigata)).